The chain runs to 701 residues: Potassium-transporting ATPase ATP-binding subunit (701 aa).

The segment at methionine 1–lysine 28 is disordered. 4 helical membrane passes run methionine 57–phenylalanine 77, glycine 90–alanine 110, valine 245–alanine 265, and isoleucine 276–isoleucine 296. The active-site 4-aspartylphosphate intermediate is aspartate 329. Residues aspartate 366, glutamate 370, phenylalanine 397–serine 404, and lysine 416 each bind ATP. Aspartate 539 and aspartate 543 together coordinate Mg(2+). Helical transmembrane passes span phenylalanine 599 to alanine 619, alanine 635 to leucine 655, and valine 681 to alanine 701.

Belongs to the cation transport ATPase (P-type) (TC 3.A.3) family. Type IA subfamily. As to quaternary structure, the system is composed of three essential subunits: KdpA, KdpB and KdpC.

It localises to the cell membrane. It catalyses the reaction K(+)(out) + ATP + H2O = K(+)(in) + ADP + phosphate + H(+). Part of the high-affinity ATP-driven potassium transport (or Kdp) system, which catalyzes the hydrolysis of ATP coupled with the electrogenic transport of potassium into the cytoplasm. This subunit is responsible for energy coupling to the transport system and for the release of the potassium ions to the cytoplasm. The protein is Potassium-transporting ATPase ATP-binding subunit of Anabaena sp. (strain L31).